The following is a 743-amino-acid chain: NAD(P)H-quinone oxidoreductase subunit 5, chloroplastic (743 aa).

16 helical membrane passes run 9–29 (WIIP…LLLF), 40–60 (WAFQ…NLSI), 89–109 (IDPL…LVLI), 125–145 (FAYM…SNLI), 147–167 (IYIF…FWFT), 185–205 (GDFG…SFEF), 219–239 (NEVN…GAIA), 258–278 (TPIS…FLVA), 283–303 (LFIV…ITVF), 327–347 (LGYM…FHLI), 354–374 (ALLF…VGYC), 396–416 (ISFL…CFWS), 425–445 (WLYS…TAFY), 548–568 (LFPI…GIPF), 607–627 (VFSV…YKPV), and 723–743 (YLFF…FFNL).

It belongs to the complex I subunit 5 family. As to quaternary structure, NDH is composed of at least 16 different subunits, 5 of which are encoded in the nucleus.

Its subcellular location is the plastid. The protein resides in the chloroplast thylakoid membrane. The catalysed reaction is a plastoquinone + NADH + (n+1) H(+)(in) = a plastoquinol + NAD(+) + n H(+)(out). The enzyme catalyses a plastoquinone + NADPH + (n+1) H(+)(in) = a plastoquinol + NADP(+) + n H(+)(out). In terms of biological role, NDH shuttles electrons from NAD(P)H:plastoquinone, via FMN and iron-sulfur (Fe-S) centers, to quinones in the photosynthetic chain and possibly in a chloroplast respiratory chain. The immediate electron acceptor for the enzyme in this species is believed to be plastoquinone. Couples the redox reaction to proton translocation, and thus conserves the redox energy in a proton gradient. This Carthamus tinctorius (Safflower) protein is NAD(P)H-quinone oxidoreductase subunit 5, chloroplastic (ndhF).